The following is a 123-amino-acid chain: Histone H2B (123 aa).

The interval 1–32 (MAPKAPGKGAKKAAKSKAPRAPGDRKRKRTRR) is disordered. Positions 9-18 (GAKKAAKSKA) are enriched in basic residues. A glycan (O-linked (GlcNAc) serine) is linked at Ser110. Residue Lys118 forms a Glycyl lysine isopeptide (Lys-Gly) (interchain with G-Cter in ubiquitin) linkage.

It belongs to the histone H2B family. The nucleosome is a histone octamer containing two molecules each of H2A, H2B, H3 and H4 assembled in one H3-H4 heterotetramer and two H2A-H2B heterodimers. The octamer wraps approximately 147 bp of DNA. In terms of processing, monoubiquitination of Lys-118 gives a specific tag for epigenetic transcriptional activation and is also prerequisite for histone H3 'Lys-4' and 'Lys-79' methylation. GlcNAcylation at Ser-110 promotes monoubiquitination of Lys-118. It fluctuates in response to extracellular glucose, and associates with transcribed genes.

It is found in the nucleus. It localises to the chromosome. Core component of nucleosome. Nucleosomes wrap and compact DNA into chromatin, limiting DNA accessibility to the cellular machineries which require DNA as a template. Histones thereby play a central role in transcription regulation, DNA repair, DNA replication and chromosomal stability. DNA accessibility is regulated via a complex set of post-translational modifications of histones, also called histone code, and nucleosome remodeling. The sequence is that of Histone H2B from Holothuria tubulosa (Tubular sea cucumber).